Consider the following 356-residue polypeptide: Putative KilA-N domain-containing protein R878 (356 aa).

Residues 1–12 (MKVRKSNNKPLK) are compositionally biased toward basic residues. A disordered region spans residues 1-114 (MKVRKSNNKP…DDDGSDNNVY (114 aa)). Over residues 14–46 (SASFTSGTKTGSKSAKSVNSGSKSMKSTKSSSK) the composition is skewed to low complexity. Acidic residues predominate over residues 66–114 (SDNDELSDNEISDNESSDDDEISDNESSDDDEISDNEISDDDGSDNNVY). The KilA-N domain maps to 130–239 (NYSKGKFGNF…VRIGFCMEEW (110 aa)).

The chain is Putative KilA-N domain-containing protein R878 from Acanthamoeba polyphaga (Amoeba).